Here is a 667-residue protein sequence, read N- to C-terminus: Probable potassium transport system protein Kup (667 aa).

Transmembrane regions (helical) follow at residues 16 to 36 (GFIIALGIVYGDIGTSPLYTM), 58 to 78 (VSLIIWTLTLVTTIKYVLIAL), 101 to 121 (WLIIPAMLGGATLLSDGALTP), 146 to 166 (TNVILTTLLILMVLFGLQRFG), 167 to 187 (TGVIGKLFGPVMLVWFSVLGI), 221 to 241 (IFILGSIFLATTGAEALYSDL), 253 to 273 (WPFVKVCIILSYCGQAAWILA), 294 to 314 (VYLVILATLAAIIASQALISG), 343 to 363 (LYIPVINWSLFAVTSCTVLYF), 373 to 393 (YGLAITITMLMTTILLAYYLI), 399 to 419 (PLLASLLMAFFAFIEFIFFLA), and 431 to 451 (VVVLALAIVFVMVIWHAGTVI).

Belongs to the HAK/KUP transporter (TC 2.A.72) family.

It is found in the cell membrane. The enzyme catalyses K(+)(in) + H(+)(in) = K(+)(out) + H(+)(out). Transport of potassium into the cell. Likely operates as a K(+):H(+) symporter. The sequence is that of Probable potassium transport system protein Kup from Streptococcus equi subsp. zooepidemicus (strain H70).